Reading from the N-terminus, the 358-residue chain is Putative ZDHHC-type palmitoyltransferase 4 (358 aa).

4 helical membrane passes run 28–48 (FVGFATSLITLIAITYFTIIF), 57–77 (LFFIFNFFCDLSISLFLTYGI), 171–191 (YFFLFLSYLWVSVCYVLAHSL), and 210–230 (LLVIISSIGSFITFVAVGSFG). Positions 127–177 (SYCKKCSKAKPPRCHHCSVCDKCVLKMDHHCPWIGGCVGFYNYRYFFLFLS) constitute a DHHC domain. N-linked (GlcNAc...) asparagine glycosylation is found at Asn-255 and Asn-296. The disordered stretch occupies residues 302–358 (NNKNNENNENNENNEIDNHNNNNNNNNNNNNNEKEDNINENDNLISYDTDEYNRHKK). Low complexity predominate over residues 305 to 332 (NNENNENNENNEIDNHNNNNNNNNNNNN).

The protein belongs to the DHHC palmitoyltransferase family.

The protein localises to the membrane. The enzyme catalyses L-cysteinyl-[protein] + hexadecanoyl-CoA = S-hexadecanoyl-L-cysteinyl-[protein] + CoA. In Dictyostelium discoideum (Social amoeba), this protein is Putative ZDHHC-type palmitoyltransferase 4.